A 428-amino-acid polypeptide reads, in one-letter code: Cyclic AMP-responsive element-binding protein 3-like protein 3-B (428 aa).

Topologically, residues 1–286 (MDHYSDQGGD…VMNGSNKPVQ (286 aa)) are cytoplasmic. A compositionally biased stretch (low complexity) spans 67 to 83 (VSGSPVWSPSPSDSGIS). A disordered region spans residues 67–104 (VSGSPVWSPSPSDSGISEDPHSDHIDSPPPNASPPMEP). Pro residues predominate over residues 93 to 103 (SPPPNASPPME). The bZIP domain maps to 210–273 (ILKKIRRKIR…ISLMEQLRRL (64 aa)). The tract at residues 212-241 (KKIRRKIRNKQSAQESRKKKKEYIDGLESR) is basic motif. Residues 252–273 (LQRKVFQLEKCNISLMEQLRRL) are leucine-zipper. The helical; Signal-anchor for type II membrane protein transmembrane segment at 287 to 303 (AGTCVLVLLLSFTLILL) threads the bilayer. Residues 304-428 (PNLKPFTDTK…SRRSPHADDM (125 aa)) lie on the Lumenal side of the membrane. A disordered region spans residues 381 to 428 (TEYDPESHNHSFDQHDEHHHGDPITGHVATVTLNPRRGSRRSPHADDM). The span at 385-402 (PESHNHSFDQHDEHHHGD) shows a compositional bias: basic and acidic residues. Asn-389 is a glycosylation site (N-linked (GlcNAc...) asparagine).

It belongs to the bZIP family. ATF subfamily. As to quaternary structure, binds DNA as a dimer. Controlled by regulated intramembrane proteolysis (RIP). A fragment containing the cytoplasmic transcription factor domain is released by proteolysis. The cleavage seems to be performed sequentially by site-1 and site-2 proteases.

The protein resides in the endoplasmic reticulum membrane. The protein localises to the nucleus. Its function is as follows. Transcriptional activator. Binds the cAMP response element (CRE). Activates transcription through box-B element and CRE. Seems to function synergistically with atf6. Regulates FGF21 transcription. In Danio rerio (Zebrafish), this protein is Cyclic AMP-responsive element-binding protein 3-like protein 3-B (creb3l3b).